A 382-amino-acid chain; its full sequence is F-box protein At3g27290 (382 aa).

Positions 16–105 constitute an F-box domain; that stretch reads RKLELGLGEF…VDQMLFETLS (90 aa).

This is F-box protein At3g27290 from Arabidopsis thaliana (Mouse-ear cress).